A 591-amino-acid chain; its full sequence is Protein NRT1/ PTR FAMILY 1.1 (591 aa).

11 helical membrane-spanning segments follow: residues 68–88 (TVLF…AFLS), 98–118 (IVIA…TAML), 139–159 (SSQL…SGGI), 186–206 (FFGW…TVIV), 216–236 (IGFG…VFAS), 329–349 (LKAL…SINV), 374–394 (IPAG…VVLY), 418–438 (MGLG…VEHY), 460–480 (AMWL…TGIG), 496–516 (IAAS…SVIL), and 543–563 (YYWV…VCSW).

Belongs to the major facilitator superfamily. Proton-dependent oligopeptide transporter (POT/PTR) (TC 2.A.17) family. Expressed in siliques, shoots and roots. Mainly detected in larger expanded leaves, in the companion cells of major veins.

The protein resides in the cell membrane. Functionally, low-affinity nitrate transporter involved in xylem-to-phloem transfer for redistributing nitrate into developing leaves. Not involved in dipeptides transport. The sequence is that of Protein NRT1/ PTR FAMILY 1.1 (NPF1.1) from Arabidopsis thaliana (Mouse-ear cress).